We begin with the raw amino-acid sequence, 386 residues long: Queuine tRNA-ribosyltransferase (386 aa).

The Proton acceptor role is filled by Asp102. Substrate contacts are provided by residues 102 to 106 (DSGGY), Asp156, Gln203, and Gly230. The RNA binding stretch occupies residues 261–267 (GVGKPDD). Catalysis depends on Asp280, which acts as the Nucleophile. An RNA binding; important for wobble base 34 recognition region spans residues 285–289 (TRSGR). 4 residues coordinate Zn(2+): Cys318, Cys320, Cys323, and His349.

This sequence belongs to the queuine tRNA-ribosyltransferase family. As to quaternary structure, homodimer. Within each dimer, one monomer is responsible for RNA recognition and catalysis, while the other monomer binds to the replacement base PreQ1. Requires Zn(2+) as cofactor.

It catalyses the reaction 7-aminomethyl-7-carbaguanine + guanosine(34) in tRNA = 7-aminomethyl-7-carbaguanosine(34) in tRNA + guanine. Its pathway is tRNA modification; tRNA-queuosine biosynthesis. Its function is as follows. Catalyzes the base-exchange of a guanine (G) residue with the queuine precursor 7-aminomethyl-7-deazaguanine (PreQ1) at position 34 (anticodon wobble position) in tRNAs with GU(N) anticodons (tRNA-Asp, -Asn, -His and -Tyr). Catalysis occurs through a double-displacement mechanism. The nucleophile active site attacks the C1' of nucleotide 34 to detach the guanine base from the RNA, forming a covalent enzyme-RNA intermediate. The proton acceptor active site deprotonates the incoming PreQ1, allowing a nucleophilic attack on the C1' of the ribose to form the product. After dissociation, two additional enzymatic reactions on the tRNA convert PreQ1 to queuine (Q), resulting in the hypermodified nucleoside queuosine (7-(((4,5-cis-dihydroxy-2-cyclopenten-1-yl)amino)methyl)-7-deazaguanosine). This Zymomonas mobilis subsp. mobilis (strain ATCC 31821 / ZM4 / CP4) protein is Queuine tRNA-ribosyltransferase.